The primary structure comprises 139 residues: Large ribosomal subunit protein uL16 (139 aa).

Belongs to the universal ribosomal protein uL16 family. Part of the 50S ribosomal subunit.

In terms of biological role, binds 23S rRNA and is also seen to make contacts with the A and possibly P site tRNAs. This chain is Large ribosomal subunit protein uL16, found in Koribacter versatilis (strain Ellin345).